Here is a 360-residue protein sequence, read N- to C-terminus: Mannose-1-phosphate guanyltransferase beta-A (360 aa).

It belongs to the transferase hexapeptide repeat family.

The catalysed reaction is alpha-D-mannose 1-phosphate + GTP + H(+) = GDP-alpha-D-mannose + diphosphate. Its pathway is nucleotide-sugar biosynthesis; GDP-alpha-D-mannose biosynthesis; GDP-alpha-D-mannose from alpha-D-mannose 1-phosphate (GTP route): step 1/1. This chain is Mannose-1-phosphate guanyltransferase beta-A (gmppb-a), found in Xenopus laevis (African clawed frog).